Consider the following 894-residue polypeptide: Coiled-coil domain-containing protein 39 (894 aa).

4 coiled-coil regions span residues 32–143, 187–411, 461–609, and 647–788; these read TENE…DQFK, ALER…LKKE, VRSE…ELKE, and KAAQ…KLRQ. Residues 844–857 are compositionally biased toward low complexity; it reads GSNPPSLGGSRPGS. The interval 844–894 is disordered; it reads GSNPPSLGGSRPGSARSQTSLGSVRSARSVASQQRGGMGGSPAVRTIQLGA.

It belongs to the CCDC39 family. Interacts with CCDC40/FAP172. Phosphorylated in flagella.

The protein localises to the cell projection. Its subcellular location is the cilium. The protein resides in the flagellum. Its function is as follows. Required for assembly of dynein regulatory complex (DRC) and inner dynein arm complexes, which are responsible for ciliary beat regulation, by acting as a molecular ruler that determines the 96 nanometer (nm) repeat length and arrangements of components in cilia and flagella. Together with CCDC40/FAP172 forms a 96-nm-long complex in flagella. This complex does not act as a physical ruler, but rather act as a negative regulator for radial spokes: the complex lays along specific protofilaments, masking radial spoke binding sites and allowing recruitment of inner dynein arm (IDA) and nexin-dynein regulatory complexes (N-DRC). The chain is Coiled-coil domain-containing protein 39 (CCDC39) from Chlamydomonas reinhardtii (Chlamydomonas smithii).